A 255-amino-acid polypeptide reads, in one-letter code: uncharacterized protein (255 aa).

2 disordered regions span residues C112–G145 and G157–Q183.

This is an uncharacterized protein from Rhodospirillum rubrum.